Consider the following 837-residue polypeptide: Protein translocase subunit SecA (837 aa).

Residues Gln-85, 103 to 107 (GEGKT), and Asp-493 each bind ATP. Residues Cys-821, Cys-823, Cys-832, and His-833 each coordinate Zn(2+).

It belongs to the SecA family. In terms of assembly, monomer and homodimer. Part of the essential Sec protein translocation apparatus which comprises SecA, SecYEG and auxiliary proteins SecDF. Other proteins may also be involved. Requires Zn(2+) as cofactor.

It is found in the cell membrane. The protein localises to the cytoplasm. It carries out the reaction ATP + H2O + cellular proteinSide 1 = ADP + phosphate + cellular proteinSide 2.. Part of the Sec protein translocase complex. Interacts with the SecYEG preprotein conducting channel. Has a central role in coupling the hydrolysis of ATP to the transfer of proteins into and across the cell membrane, serving as an ATP-driven molecular motor driving the stepwise translocation of polypeptide chains across the membrane. This is Protein translocase subunit SecA from Streptococcus pneumoniae (strain P1031).